The following is a 144-amino-acid chain: Large ribosomal subunit protein uL15 (144 aa).

Over residues 1–18 (MRLNDLHPAEGSRPEGKR) the composition is skewed to basic and acidic residues. Residues 1 to 58 (MRLNDLHPAEGSRPEGKRVGRGIGSGLGKTGGRGHKGQKSRSGGSVKPGFEGGQMPLQ) are disordered. Over residues 21–31 (RGIGSGLGKTG) the composition is skewed to gly residues.

The protein belongs to the universal ribosomal protein uL15 family. In terms of assembly, part of the 50S ribosomal subunit.

Binds to the 23S rRNA. The sequence is that of Large ribosomal subunit protein uL15 from Alcanivorax borkumensis (strain ATCC 700651 / DSM 11573 / NCIMB 13689 / SK2).